The primary structure comprises 896 residues: Translation initiation factor IF-2 (896 aa).

The segment at 49–310 (LKKEHGDTSG…MQQGFDKSAT (262 aa)) is disordered. The segment covering 57–66 (SGETEPTRLT) has biased composition (polar residues). Basic and acidic residues-rich tracts occupy residues 101–174 (STIE…KDMN), 184–240 (AKKE…KSAD), and 250–263 (REAE…DEKA). Basic residues predominate over residues 284 to 295 (RNQRGRGGKGKL). Residues 395-564 (GRAPVVTIMG…LLQSEVLELT (170 aa)) form the tr-type G domain. The interval 404–411 (GHVDHGKT) is G1. Position 404–411 (404–411 (GHVDHGKT)) interacts with GTP. A G2 region spans residues 429-433 (GITQH). The tract at residues 450-453 (DTPG) is G3. Residues 450–454 (DTPGH) and 504–507 (NKID) each bind GTP. The G4 stretch occupies residues 504–507 (NKID). Residues 540–542 (SAK) are G5.

Belongs to the TRAFAC class translation factor GTPase superfamily. Classic translation factor GTPase family. IF-2 subfamily.

The protein resides in the cytoplasm. Its function is as follows. One of the essential components for the initiation of protein synthesis. Protects formylmethionyl-tRNA from spontaneous hydrolysis and promotes its binding to the 30S ribosomal subunits. Also involved in the hydrolysis of GTP during the formation of the 70S ribosomal complex. The sequence is that of Translation initiation factor IF-2 from Vibrio atlanticus (strain LGP32) (Vibrio splendidus (strain Mel32)).